A 251-amino-acid chain; its full sequence is Pyrroloquinoline-quinone synthase (251 aa).

It belongs to the PqqC family.

It catalyses the reaction 6-(2-amino-2-carboxyethyl)-7,8-dioxo-1,2,3,4,7,8-hexahydroquinoline-2,4-dicarboxylate + 3 O2 = pyrroloquinoline quinone + 2 H2O2 + 2 H2O + H(+). It participates in cofactor biosynthesis; pyrroloquinoline quinone biosynthesis. Its function is as follows. Ring cyclization and eight-electron oxidation of 3a-(2-amino-2-carboxyethyl)-4,5-dioxo-4,5,6,7,8,9-hexahydroquinoline-7,9-dicarboxylic-acid to PQQ. The sequence is that of Pyrroloquinoline-quinone synthase from Pseudomonas putida (strain ATCC 47054 / DSM 6125 / CFBP 8728 / NCIMB 11950 / KT2440).